Here is a 126-residue protein sequence, read N- to C-terminus: Iron-sulfur cluster insertion protein ErpA (126 aa).

The interval 1–21 is disordered; that stretch reads MNQPANQFNPSSSQPVDPTVL. Cysteine 54, cysteine 118, and cysteine 120 together coordinate iron-sulfur cluster.

This sequence belongs to the HesB/IscA family. Homodimer. The cofactor is iron-sulfur cluster.

In terms of biological role, required for insertion of 4Fe-4S clusters for at least IspG. This chain is Iron-sulfur cluster insertion protein ErpA, found in Psychrobacter arcticus (strain DSM 17307 / VKM B-2377 / 273-4).